The following is a 360-amino-acid chain: Peptide chain release factor 1 (360 aa).

Gln237 carries the post-translational modification N5-methylglutamine.

It belongs to the prokaryotic/mitochondrial release factor family. In terms of processing, methylated by PrmC. Methylation increases the termination efficiency of RF1.

The protein resides in the cytoplasm. Peptide chain release factor 1 directs the termination of translation in response to the peptide chain termination codons UAG and UAA. The sequence is that of Peptide chain release factor 1 from Cellvibrio japonicus (strain Ueda107) (Pseudomonas fluorescens subsp. cellulosa).